The primary structure comprises 779 residues: Polyribonucleotide nucleotidyltransferase (779 aa).

Mg(2+) is bound by residues D490 and D496. Residues P557–V618 enclose the KH domain. In terms of domain architecture, S1 motif spans G625–P693. Residues V699–R752 are compositionally biased toward basic and acidic residues. A disordered region spans residues V699–D779. A compositionally biased stretch (polar residues) spans P757–D767.

The protein belongs to the polyribonucleotide nucleotidyltransferase family. Requires Mg(2+) as cofactor.

Its subcellular location is the cytoplasm. It carries out the reaction RNA(n+1) + phosphate = RNA(n) + a ribonucleoside 5'-diphosphate. In terms of biological role, involved in mRNA degradation. Catalyzes the phosphorolysis of single-stranded polyribonucleotides processively in the 3'- to 5'-direction. This Deinococcus radiodurans (strain ATCC 13939 / DSM 20539 / JCM 16871 / CCUG 27074 / LMG 4051 / NBRC 15346 / NCIMB 9279 / VKM B-1422 / R1) protein is Polyribonucleotide nucleotidyltransferase.